The chain runs to 266 residues: Small ribosomal subunit protein uS2 (266 aa).

Residues 233-266 (AVREEEFASAPDAGKKGRQAQPKKGKRASDAAAE) form a disordered region. The span at 248 to 258 (KGRQAQPKKGK) shows a compositional bias: basic residues.

This sequence belongs to the universal ribosomal protein uS2 family.

The chain is Small ribosomal subunit protein uS2 from Xylella fastidiosa (strain M23).